We begin with the raw amino-acid sequence, 154 residues long: MATFSQKPAEVEKKWVIIDAEGLVVGRLASIIAMRLRGKHKATFTPHVDDGDNVIVINADKVVFTGKKYSDKVYYWHTGFAGGIKERTARQIIEGRFPERVLEKAVERMVPRGPLGRRQMKNLRVYAGSNHPHEAQQPVALDVAVLNKKNVRSA.

Belongs to the universal ribosomal protein uL13 family. As to quaternary structure, part of the 50S ribosomal subunit.

In terms of biological role, this protein is one of the early assembly proteins of the 50S ribosomal subunit, although it is not seen to bind rRNA by itself. It is important during the early stages of 50S assembly. The chain is Large ribosomal subunit protein uL13 from Rhizobium leguminosarum bv. trifolii (strain WSM2304).